Here is a 486-residue protein sequence, read N- to C-terminus: Transcriptional regulator ERG (486 aa).

The segment covering 41-54 (TASSSSDYGQTSKM) has biased composition (polar residues). Disordered stretches follow at residues 41-62 (TASSSSDYGQTSKMSPRVPQQD) and 79-99 (PSQVNGSRNSPDECSVNKGGK). Phosphoserine occurs at positions 55, 88, and 103. Positions 120–206 (VPPPNMTTNE…SHLHYLRETP (87 aa)) constitute a PNT domain. The disordered stretch occupies residues 249-311 (QRITTRPDLP…ILGPTSSRLA (63 aa)). Residues 271-284 (SHLTPQSKAAQPSP) are compositionally biased toward polar residues. Residue Lys-289 forms a Glycyl lysine isopeptide (Lys-Gly) (interchain with G-Cter in SUMO2) linkage. The ETS DNA-binding region spans 318–398 (IQLWQFLLEL…HGKRYAYKFD (81 aa)).

The protein belongs to the ETS family. Identified in a IGF2BP1-dependent mRNP granule complex containing untranslated mRNAs. Interacts with SETDB1.

The protein resides in the nucleus. It is found in the cytoplasm. In terms of biological role, transcriptional regulator. May participate in transcriptional regulation through the recruitment of SETDB1 histone methyltransferase and subsequent modification of local chromatin structure. This chain is Transcriptional regulator ERG (Erg), found in Mus musculus (Mouse).